The sequence spans 31 residues: Nemertide alpha-6 (31 aa).

3 disulfide bridges follow: Cys-2–Cys-16, Cys-9–Cys-20, and Cys-15–Cys-26. A 4-hydroxyproline mark is found at Pro-28 and Pro-29.

The protein belongs to the nemertide family. Confined to the epidermis and to the mucus layer.

It is found in the secreted. In terms of biological role, highly potent toxin against both insect and some mammalian sodium channels (Nav). It potently inhibits inactivation of insect sodium channels of B.germanica (BgNav1) (EC(50)=2.6 nM) and also delays the inactivation of mammalian Nav with potent activity on Nav1.1/SCN1A (hNav1.1/SCN1A; EC(50)=7.9 nM, rNav1.2/SCN2A; EC(50)=24.3 nM, rNav1.3/SCN3A; EC(50)=105.6 nM, rNav1.4/SCN4A; EC(50)=46.4 nM, hNav1.5/SCN5A; EC(50)=215.2 nM, mNav1.6/SCN8A; EC(50)=36.3 nM, hNav1.9/SCN9A; EC(50)=97.2 nM). 1 uM is enough to completely inhibits the inactivation, resulting in sustained non-inactivating currents. In addition, the toxin significantly enhances the recovery from inactivation, and the open state is not required for the toxin to interact with the channel. In vivo, injection into brine shrimp (Artemia salina) stops movement or causes death after 24 hours (EC(50)=2.8 uM). The sequence is that of Nemertide alpha-6 from Lineus sanguineus (Ribbon worm).